A 185-amino-acid polypeptide reads, in one-letter code: Imidazoleglycerol-phosphate dehydratase (185 aa).

It belongs to the imidazoleglycerol-phosphate dehydratase family.

Its subcellular location is the cytoplasm. The enzyme catalyses D-erythro-1-(imidazol-4-yl)glycerol 3-phosphate = 3-(imidazol-4-yl)-2-oxopropyl phosphate + H2O. Its pathway is amino-acid biosynthesis; L-histidine biosynthesis; L-histidine from 5-phospho-alpha-D-ribose 1-diphosphate: step 6/9. This chain is Imidazoleglycerol-phosphate dehydratase, found in Pyrobaculum arsenaticum (strain DSM 13514 / JCM 11321 / PZ6).